The sequence spans 404 residues: Ubiquitin-like modifier-activating enzyme 5 (404 aa).

The ATP site is built by Gly-83, Asp-104, Lys-127, Asn-150, and Asn-184. Cys-226 and Cys-229 together coordinate Zn(2+). Residue Cys-250 is the Glycyl thioester intermediate of the active site. Residues Cys-303 and Cys-308 each coordinate Zn(2+). The segment at 372–404 (APEKSSETSEETVSAATADETSLEDLMAQMKSM) is disordered. Residues 382-391 (ETVSAATADE) show a composition bias toward low complexity.

This sequence belongs to the ubiquitin-activating E1 family. UBA5 subfamily. In terms of assembly, interacts (via C-terminus) with Ufc1. Interacts with Ufm1.

The protein localises to the cytoplasm. Its subcellular location is the nucleus. It localises to the golgi apparatus. In terms of biological role, E1-like enzyme which activates UFM1. The protein is Ubiquitin-like modifier-activating enzyme 5 of Drosophila melanogaster (Fruit fly).